A 124-amino-acid polypeptide reads, in one-letter code: Small ribosomal subunit protein uS12 (124 aa).

D89 carries the 3-methylthioaspartic acid modification. Positions 102 to 124 are disordered; the sequence is LDTSGVNNRKHGRSKYGTKRPKS. Residues 109–124 are compositionally biased toward basic residues; that stretch reads NRKHGRSKYGTKRPKS.

This sequence belongs to the universal ribosomal protein uS12 family. As to quaternary structure, part of the 30S ribosomal subunit. Contacts proteins S8 and S17. May interact with IF1 in the 30S initiation complex.

With S4 and S5 plays an important role in translational accuracy. Functionally, interacts with and stabilizes bases of the 16S rRNA that are involved in tRNA selection in the A site and with the mRNA backbone. Located at the interface of the 30S and 50S subunits, it traverses the body of the 30S subunit contacting proteins on the other side and probably holding the rRNA structure together. The combined cluster of proteins S8, S12 and S17 appears to hold together the shoulder and platform of the 30S subunit. In Francisella tularensis subsp. tularensis (strain FSC 198), this protein is Small ribosomal subunit protein uS12.